The chain runs to 149 residues: Deoxyuridine 5'-triphosphate nucleotidohydrolase (149 aa).

Substrate is bound by residues 70–72 (RSG), Asn-83, and 87–89 (LID).

Belongs to the dUTPase family. It depends on Mg(2+) as a cofactor.

It catalyses the reaction dUTP + H2O = dUMP + diphosphate + H(+). The protein operates within pyrimidine metabolism; dUMP biosynthesis; dUMP from dCTP (dUTP route): step 2/2. Functionally, this enzyme is involved in nucleotide metabolism: it produces dUMP, the immediate precursor of thymidine nucleotides and it decreases the intracellular concentration of dUTP so that uracil cannot be incorporated into DNA. The sequence is that of Deoxyuridine 5'-triphosphate nucleotidohydrolase from Blochmanniella pennsylvanica (strain BPEN).